A 214-amino-acid polypeptide reads, in one-letter code: Large ribosomal subunit protein bL25 (214 aa).

The interval 179–214 (VPPTQGPSEAEIEEVEAGDADTPEPEVVGEKEEDEE) is disordered. Over residues 188–202 (AEIEEVEAGDADTPE) the composition is skewed to acidic residues.

Belongs to the bacterial ribosomal protein bL25 family. CTC subfamily. In terms of assembly, part of the 50S ribosomal subunit; part of the 5S rRNA/L5/L18/L25 subcomplex. Contacts the 5S rRNA. Binds to the 5S rRNA independently of L5 and L18.

In terms of biological role, this is one of the proteins that binds to the 5S RNA in the ribosome where it forms part of the central protuberance. The chain is Large ribosomal subunit protein bL25 from Staphylococcus carnosus (strain TM300).